The sequence spans 304 residues: HPr kinase/phosphorylase (304 aa).

Catalysis depends on residues histidine 136 and lysine 157. Residue 151–158 (GESGIGKS) participates in ATP binding. Serine 158 is a Mg(2+) binding site. The active-site Proton acceptor; for phosphorylation activity. Proton donor; for dephosphorylation activity is aspartate 175. An important for the catalytic mechanism of both phosphorylation and dephosphorylation region spans residues 198 to 207 (LEVRGIGIID). Glutamate 199 serves as a coordination point for Mg(2+). Residue arginine 240 is part of the active site. The interval 261–266 (PVRPGR) is important for the catalytic mechanism of dephosphorylation.

This sequence belongs to the HPrK/P family. As to quaternary structure, homohexamer. Mg(2+) serves as cofactor.

It catalyses the reaction [HPr protein]-L-serine + ATP = [HPr protein]-O-phospho-L-serine + ADP + H(+). It carries out the reaction [HPr protein]-O-phospho-L-serine + phosphate + H(+) = [HPr protein]-L-serine + diphosphate. Its function is as follows. Catalyzes the ATP- as well as the pyrophosphate-dependent phosphorylation of a specific serine residue in HPr, a phosphocarrier protein of the phosphoenolpyruvate-dependent sugar phosphotransferase system (PTS). HprK/P also catalyzes the pyrophosphate-producing, inorganic phosphate-dependent dephosphorylation (phosphorolysis) of seryl-phosphorylated HPr (P-Ser-HPr). The two antagonistic activities of HprK/P are regulated by several intracellular metabolites, which change their concentration in response to the absence or presence of rapidly metabolisable carbon sources (glucose, fructose, etc.) in the growth medium. Therefore, by controlling the phosphorylation state of HPr, HPrK/P is a sensor enzyme that plays a major role in the regulation of carbon metabolism and sugar transport: it mediates carbon catabolite repression (CCR), and regulates PTS-catalyzed carbohydrate uptake and inducer exclusion. The polypeptide is HPr kinase/phosphorylase (Clostridium botulinum (strain Alaska E43 / Type E3)).